A 456-amino-acid chain; its full sequence is Argininosuccinate lyase (456 aa).

This sequence belongs to the lyase 1 family. Argininosuccinate lyase subfamily.

The protein localises to the cytoplasm. It catalyses the reaction 2-(N(omega)-L-arginino)succinate = fumarate + L-arginine. The protein operates within amino-acid biosynthesis; L-arginine biosynthesis; L-arginine from L-ornithine and carbamoyl phosphate: step 3/3. This is Argininosuccinate lyase from Listeria monocytogenes serotype 4a (strain HCC23).